A 116-amino-acid polypeptide reads, in one-letter code: Ribonuclease T (116 aa).

One can recognise an Exonuclease domain in the interval Lys-18 to Phe-99. His-86 (proton donor/acceptor) is an active-site residue.

It belongs to the RNase T family. Homodimer.

Its function is as follows. Trims short 3' overhangs of a variety of RNA species, leaving a one or two nucleotide 3' overhang. Responsible for the end-turnover of tRNA: specifically removes the terminal AMP residue from uncharged tRNA (tRNA-C-C-A). Also appears to be involved in tRNA biosynthesis. The sequence is that of Ribonuclease T from Azotobacter vinelandii.